Consider the following 159-residue polypeptide: 2-C-methyl-D-erythritol 2,4-cyclodiphosphate synthase (159 aa).

A divalent metal cation-binding residues include D10 and H12. Residues D10–H12 and H37–S38 each bind 4-CDP-2-C-methyl-D-erythritol 2-phosphate. Position 45 (H45) interacts with a divalent metal cation. Residues D59–G61, F64–D68, A103–L109, T135–E138, F142, and R145 each bind 4-CDP-2-C-methyl-D-erythritol 2-phosphate.

The protein belongs to the IspF family. As to quaternary structure, homotrimer. It depends on a divalent metal cation as a cofactor.

The enzyme catalyses 4-CDP-2-C-methyl-D-erythritol 2-phosphate = 2-C-methyl-D-erythritol 2,4-cyclic diphosphate + CMP. It participates in isoprenoid biosynthesis; isopentenyl diphosphate biosynthesis via DXP pathway; isopentenyl diphosphate from 1-deoxy-D-xylulose 5-phosphate: step 4/6. Its function is as follows. Involved in the biosynthesis of isopentenyl diphosphate (IPP) and dimethylallyl diphosphate (DMAPP), two major building blocks of isoprenoid compounds. Catalyzes the conversion of 4-diphosphocytidyl-2-C-methyl-D-erythritol 2-phosphate (CDP-ME2P) to 2-C-methyl-D-erythritol 2,4-cyclodiphosphate (ME-CPP) with a corresponding release of cytidine 5-monophosphate (CMP). This chain is 2-C-methyl-D-erythritol 2,4-cyclodiphosphate synthase, found in Francisella tularensis subsp. holarctica (strain OSU18).